Here is a 491-residue protein sequence, read N- to C-terminus: Lysine--tRNA ligase (491 aa).

Positions 399 and 406 each coordinate Mg(2+).

This sequence belongs to the class-II aminoacyl-tRNA synthetase family. In terms of assembly, homodimer. It depends on Mg(2+) as a cofactor.

The protein localises to the cytoplasm. It catalyses the reaction tRNA(Lys) + L-lysine + ATP = L-lysyl-tRNA(Lys) + AMP + diphosphate. The sequence is that of Lysine--tRNA ligase from Chloroflexus aurantiacus (strain ATCC 29366 / DSM 635 / J-10-fl).